The sequence spans 240 residues: UPF0309 protein in nagA 3'region (240 aa).

The region spanning 31–206 (IVKRLVQGGI…CAQIIEILHE (176 aa)) is the SIS domain.

This sequence belongs to the UPF0309 family.

This Lysinibacillus sphaericus (Bacillus sphaericus) protein is UPF0309 protein in nagA 3'region.